The sequence spans 309 residues: Methionyl-tRNA formyltransferase (309 aa).

Position 107–110 (107–110) interacts with (6S)-5,6,7,8-tetrahydrofolate; sequence SLLP.

Belongs to the Fmt family.

It carries out the reaction L-methionyl-tRNA(fMet) + (6R)-10-formyltetrahydrofolate = N-formyl-L-methionyl-tRNA(fMet) + (6S)-5,6,7,8-tetrahydrofolate + H(+). Functionally, attaches a formyl group to the free amino group of methionyl-tRNA(fMet). The formyl group appears to play a dual role in the initiator identity of N-formylmethionyl-tRNA by promoting its recognition by IF2 and preventing the misappropriation of this tRNA by the elongation apparatus. In Borrelia recurrentis (strain A1), this protein is Methionyl-tRNA formyltransferase.